The sequence spans 944 residues: Translation factor GUF1 homolog, mitochondrial (944 aa).

The tr-type G domain maps to 201–379 (KNVRNFCILA…IITDIPYPPI (179 aa)). GTP-binding positions include 210–217 (AHIDSGKS), 271–275 (DTPGH), and 325–328 (NKID).

Belongs to the TRAFAC class translation factor GTPase superfamily. Classic translation factor GTPase family. LepA subfamily.

The protein resides in the mitochondrion inner membrane. It catalyses the reaction GTP + H2O = GDP + phosphate + H(+). Promotes mitochondrial protein synthesis. May act as a fidelity factor of the translation reaction, by catalyzing a one-codon backward translocation of tRNAs on improperly translocated ribosomes. Binds to mitochondrial ribosomes in a GTP-dependent manner. This is Translation factor GUF1 homolog, mitochondrial from Plasmodium yoelii yoelii.